The chain runs to 138 residues: Venom allergen 2 (138 aa).

A signal peptide spans 1 to 19 (MKSFVLATCLLGFAQIIYA).

This sequence belongs to the ant venom allergen 2/4 family. In terms of assembly, homodimer; disulfide-linked. As to expression, expressed by the venom gland.

It is found in the secreted. The polypeptide is Venom allergen 2 (Solenopsis saevissima (Fire ant)).